The sequence spans 265 residues: Probable enoyl-CoA hydratase 1, peroxisomal (265 aa).

The residue at position 1 (Met1) is an N-acetylmethionine. Residues 68 to 72 and Ala112 each bind substrate; that span reads SGVDL. A Microbody targeting signal motif is present at residues 263 to 265; that stretch reads SKL.

This sequence belongs to the enoyl-CoA hydratase/isomerase family.

The protein localises to the peroxisome. The catalysed reaction is a (3S)-3-hydroxyacyl-CoA = a (2E)-enoyl-CoA + H2O. The enzyme catalyses a 4-saturated-(3S)-3-hydroxyacyl-CoA = a (3E)-enoyl-CoA + H2O. It functions in the pathway lipid metabolism; fatty acid beta-oxidation. In terms of biological role, straight-chain enoyl-CoA thioesters from C4 up to at least C16 are processed, although with decreasing catalytic rate. The protein is Probable enoyl-CoA hydratase 1, peroxisomal of Arabidopsis thaliana (Mouse-ear cress).